The sequence spans 114 residues: Fumarate reductase subunit D (114 aa).

3 consecutive transmembrane segments (helical) span residues 24-44 (VSAIFLPVVILIIGLLLPFGL), 50-70 (LITFAYSWIGKLVILVLTIFP), and 92-112 (GGFIFYGLATIYTVWVLFAVI).

This sequence belongs to the FrdD family. Part of an enzyme complex containing four subunits: a flavoprotein (FrdA), an iron-sulfur protein (FrdB), and two hydrophobic anchor proteins (FrdC and FrdD).

Its subcellular location is the cell inner membrane. Its function is as follows. Anchors the catalytic components of the fumarate reductase complex to the cell membrane, binds quinones. The sequence is that of Fumarate reductase subunit D from Haemophilus influenzae (strain PittGG).